A 474-amino-acid chain; its full sequence is MKLSMPRFDQAPVLVVGDVMLDRYWHGGTSRISPEAPVPVVKVEQIEDRPGGAANVALNIAALGAPASLVGVTGDDEAADSLSNSLKGAGVRALFQRIAHQPTIVKLRVMSRHQQLLRIDFEEPFATDALALGAQVDDLLEGIKVLVLSDYGKGALKNHQALIQAARAKGIPVLADPKGKDFSIYRGASLITPNLSEFEAIVGGCADEHELVTKGATLMHDLDLGALLVTRGEHGMTLLRPDHPALHLPARAREVFDVTGAGDTVISTLAAAIAAGEELPHAVALANLAAGIVVGKLGTAAISAPELRRAIQREEGSERGVLGLEQLLLAVADARAHNEKIVFTNGCFDILHAGHVTYLEQARAQGDRLIVAINDDASVSRLKGPGRPINSVDRRMAVLAGLGAVDWVISFAEGTPENLLREVKPDVLVKGGDYGIDQVVGADIVKAYGGAVKVLGLVENSSTTAIVEKIRKSE.

Residues 1–318 (MKLSMPRFDQ…RAIQREEGSE (318 aa)) are ribokinase. An ATP-binding site is contributed by 194–197 (NLSE). Residue aspartate 263 is part of the active site. A cytidylyltransferase region spans residues 343–474 (FTNGCFDILH…AIVEKIRKSE (132 aa)).

In the N-terminal section; belongs to the carbohydrate kinase PfkB family. It in the C-terminal section; belongs to the cytidylyltransferase family. In terms of assembly, homodimer.

It catalyses the reaction D-glycero-beta-D-manno-heptose 7-phosphate + ATP = D-glycero-beta-D-manno-heptose 1,7-bisphosphate + ADP + H(+). The catalysed reaction is D-glycero-beta-D-manno-heptose 1-phosphate + ATP + H(+) = ADP-D-glycero-beta-D-manno-heptose + diphosphate. It participates in nucleotide-sugar biosynthesis; ADP-L-glycero-beta-D-manno-heptose biosynthesis; ADP-L-glycero-beta-D-manno-heptose from D-glycero-beta-D-manno-heptose 7-phosphate: step 1/4. Its pathway is nucleotide-sugar biosynthesis; ADP-L-glycero-beta-D-manno-heptose biosynthesis; ADP-L-glycero-beta-D-manno-heptose from D-glycero-beta-D-manno-heptose 7-phosphate: step 3/4. In terms of biological role, catalyzes the phosphorylation of D-glycero-D-manno-heptose 7-phosphate at the C-1 position to selectively form D-glycero-beta-D-manno-heptose-1,7-bisphosphate. Its function is as follows. Catalyzes the ADP transfer from ATP to D-glycero-beta-D-manno-heptose 1-phosphate, yielding ADP-D-glycero-beta-D-manno-heptose. In Pseudomonas fluorescens (strain Pf0-1), this protein is Bifunctional protein HldE.